Reading from the N-terminus, the 367-residue chain is Pentatricopeptide repeat-containing protein At1g11900 (367 aa).

8 PPR repeats span residues 69–103 (SKID…NICL), 104–139 (PISV…GKEP), 141–175 (SSDC…SLPY), 176–210 (RLIV…ECKP), 211–241 (DVIT…MKED), 247–281 (NIIT…GIEP), 282–316 (DLLS…QIRP), and 317–347 (SVYV…LKNT).

The protein belongs to the PPR family. P subfamily.

In Arabidopsis thaliana (Mouse-ear cress), this protein is Pentatricopeptide repeat-containing protein At1g11900.